Reading from the N-terminus, the 406-residue chain is Tryptophan synthase beta chain (406 aa).

Position 99 is an N6-(pyridoxal phosphate)lysine (Lys-99).

This sequence belongs to the TrpB family. In terms of assembly, tetramer of two alpha and two beta chains. Pyridoxal 5'-phosphate serves as cofactor.

The enzyme catalyses (1S,2R)-1-C-(indol-3-yl)glycerol 3-phosphate + L-serine = D-glyceraldehyde 3-phosphate + L-tryptophan + H2O. Its pathway is amino-acid biosynthesis; L-tryptophan biosynthesis; L-tryptophan from chorismate: step 5/5. Functionally, the beta subunit is responsible for the synthesis of L-tryptophan from indole and L-serine. The chain is Tryptophan synthase beta chain from Brucella melitensis biotype 2 (strain ATCC 23457).